The chain runs to 89 residues: UPF0335 protein Caul_0876 (89 aa).

This sequence belongs to the UPF0335 family.

This is UPF0335 protein Caul_0876 from Caulobacter sp. (strain K31).